Consider the following 245-residue polypeptide: tRNA1(Val) (adenine(37)-N6)-methyltransferase (245 aa).

Belongs to the methyltransferase superfamily. tRNA (adenine-N(6)-)-methyltransferase family.

It localises to the cytoplasm. It catalyses the reaction adenosine(37) in tRNA1(Val) + S-adenosyl-L-methionine = N(6)-methyladenosine(37) in tRNA1(Val) + S-adenosyl-L-homocysteine + H(+). Its function is as follows. Specifically methylates the adenine in position 37 of tRNA(1)(Val) (anticodon cmo5UAC). This Shigella sonnei (strain Ss046) protein is tRNA1(Val) (adenine(37)-N6)-methyltransferase.